The following is a 1222-amino-acid chain: Serine/threonine-protein kinase WNK4 (1222 aa).

Polar residues predominate over residues 1–17 (MLAPRNTETGVHMSQTE). The segment at 1–163 (MLAPRNTETG…KEDTETQAVA (163 aa)) is disordered. A Phosphoserine modification is found at S95. The span at 135–152 (EPPRVPDAAARERRREQE) shows a compositional bias: basic and acidic residues. Glycyl lysine isopeptide (Lys-Gly) (interchain with G-Cter in ubiquitin) cross-links involve residues K154 and K172. In terms of domain architecture, Protein kinase spans 171–429 (LKFDIEIGRG…IQDLLTHAFF (259 aa)). S181 contributes to the ATP binding site. Glycyl lysine isopeptide (Lys-Gly) (interchain with G-Cter in ubiquitin) cross-links involve residues K183, K223, and K238. ATP contacts are provided by residues 251-254 (TELM) and K301. D318 (proton acceptor) is an active-site residue. A Glycyl lysine isopeptide (Lys-Gly) (interchain with G-Cter in ubiquitin) cross-link involves residue K325. A phosphoserine; by autocatalysis mark is found at S328 and S332. Residues K384, K390, K447, and K451 each participate in a glycyl lysine isopeptide (Lys-Gly) (interchain with G-Cter in ubiquitin) cross-link. The segment at 527 to 562 (LEVLPPDSGPPPATVSMTPGPPSAFPPEPEEPEADQ) is disordered. Residues 533-553 (DSGPPPATVSMTPGPPSAFPP) are compositionally biased toward pro residues. Positions 554–564 (EPEEPEADQHQ) are interaction with KLHL3. S572 carries the post-translational modification Phosphoserine. 5 disordered regions span residues 591 to 612 (FLDA…PAEP), 626 to 679 (RSGP…SVSD), 747 to 809 (DAGP…GTPF), 836 to 873 (QVSS…SPLP), and 927 to 1087 (SPGL…QPSP). Over residues 627-638 (SGPGSDFSPGDS) the composition is skewed to low complexity. The span at 659 to 672 (NPVKTLRRRPRSRL) shows a compositional bias: basic residues. 2 stretches are compositionally biased toward low complexity: residues 792 to 809 (FSTS…GTPF) and 845 to 873 (APSS…SPLP). Pro residues predominate over residues 935 to 946 (PPAPPGPLPSMP). The segment covering 953–963 (DQESLSAQTAE) has biased composition (polar residues). Residue K990 forms a Glycyl lysine isopeptide (Lys-Gly) (interchain with G-Cter in ubiquitin) linkage. The short motif at 996-999 (RFQV) is the RFXV motif element. Residue S1014 is modified to Phosphoserine. Positions 1044-1056 (ETREALAESDRAA) are enriched in basic and acidic residues. The segment covering 1076–1086 (GGSSPILSQPS) has biased composition (polar residues). Residues K1123, K1136, and K1137 each participate in a glycyl lysine isopeptide (Lys-Gly) (interchain with G-Cter in ubiquitin) cross-link. Residues 1169 to 1222 (SKGSFPTSRRNSLQRSDLPGPGIMRRNSLSGSSTGSQEQRASKGVTFAGDVGRM) form a disordered region. 2 stretches are compositionally biased toward polar residues: residues 1172–1183 (SFPTSRRNSLQR) and 1195–1207 (NSLS…SQEQ). Position 1196 is a phosphoserine (S1196).

The protein belongs to the protein kinase superfamily. Ser/Thr protein kinase family. WNK subfamily. In terms of assembly, interacts with the C-terminal region of KCNJ1. Interacts with WNK1 and WNK3. Interacts with KLHL3. The cofactor is Mg(2+). In terms of processing, autophosphorylated at Ser-328 and Ser-332, promoting its activation. Phosphorylated by WNK1 and WNK3. Phosphorylated at Ser-572 in a MAP3K15/ASK3-dependent process in response to osmotic stress or hypotonic low-chloride stimulation. Ubiquitinated by the BCR(KLHL3) complex, leading to its degradation. Also ubiquitinated by the BCR(KLHL2) complex.

The protein resides in the cell junction. It is found in the tight junction. The enzyme catalyses L-seryl-[protein] + ATP = O-phospho-L-seryl-[protein] + ADP + H(+). The catalysed reaction is L-threonyl-[protein] + ATP = O-phospho-L-threonyl-[protein] + ADP + H(+). Its activity is regulated as follows. Activation requires autophosphorylation of Ser-328 and Ser-332. Autophosphorylation and subsequent activation is inhibited by increases in intracellular ionic strength: Cl(-) potently inhibits WNK4 kinase activity via direct binding. Also inhibited by K(+) ions. Functionally, serine/threonine-protein kinase component of the WNK4-SPAK/OSR1 kinase cascade, which acts as a key regulator of ion transport in the distal nephron and blood pressure. The WNK4-SPAK/OSR1 kinase cascade is composed of WNK4, which mediates phosphorylation and activation of downstream kinases OXSR1/OSR1 and STK39/SPAK. Following activation, OXSR1/OSR1 and STK39/SPAK catalyze phosphorylation of ion cotransporters, such as SLC12A1/NKCC2, SLC12A2/NKCC1, SLC12A3/NCC, SLC12A5/KCC2 or SLC12A6/KCC3, regulating their activity. Acts as a molecular switch that regulates the balance between renal salt reabsorption and K(+) secretion by modulating the activities of renal transporters and channels, including the Na-Cl cotransporter SLC12A3/NCC and the K(+) channel, KCNJ1/ROMK. Regulates NaCl reabsorption in the distal nephron by activating the thiazide-sensitive Na-Cl cotransporter SLC12A3/NCC in distal convoluted tubule cells of kidney: activates SLC12A3/NCC in a OXSR1/OSR1- and STK39/SPAK-dependent process. Also acts as a scaffold protein independently of its protein kinase activity: negatively regulates cell membrane localization of various transporters and channels (CFTR, KCNJ1/ROMK, SLC4A4, SLC26A9 and TRPV4) by clathrin-dependent endocytosis. Also inhibits the activity of the epithelial Na(+) channel (ENaC) SCNN1A, SCNN1B, SCNN1D in a inase-independent mechanism. May also phosphorylate NEDD4L. The polypeptide is Serine/threonine-protein kinase WNK4 (Rattus norvegicus (Rat)).